The following is a 413-amino-acid chain: Phosphatidylcholine:ceramide cholinephosphotransferase 1 (413 aa).

In terms of domain architecture, SAM spans 7–70 (WSPKKVADWL…LDMIETLKME (64 aa)). Position 8 is a phosphoserine (Ser-8). The next 5 helical transmembrane spans lie at 136 to 156 (FLAF…ISVV), 184 to 204 (FSIC…QWLL), 215 to 235 (FFCI…VTTL), 276 to 296 (MCGD…YLFI), and 304 to 324 (LWWY…CILL). Residue His-285 is part of the active site. Topologically, residues 325-413 (AHDHYTVDVV…VKYSRLVNDT (89 aa)) are cytoplasmic. Residues His-328 and Asp-332 contribute to the active site.

It belongs to the sphingomyelin synthase family. Brain, heart, kidney, liver, muscle and stomach.

The protein resides in the golgi apparatus membrane. It catalyses the reaction an N-acylsphing-4-enine + a 1,2-diacyl-sn-glycero-3-phosphocholine = a sphingomyelin + a 1,2-diacyl-sn-glycerol. The enzyme catalyses an N-acylsphinganine + a 1,2-diacyl-sn-glycero-3-phosphocholine = an N-acylsphinganine-1-phosphocholine + a 1,2-diacyl-sn-glycerol. It carries out the reaction an N-acyl-(4R)-4-hydroxysphinganine + a 1,2-diacyl-sn-glycero-3-phosphocholine = an N-acyl-(4R)-4-hydroxysphinganine-phosphocholine + a 1,2-diacyl-sn-glycerol. The catalysed reaction is 1-(9Z-octadecenoyl)-2-acyl-sn-3-glycerol + a sphingomyelin = a 1-(9Z-octadecenoyl)-2-acyl-sn-glycero-3-phosphocholine + an N-acylsphing-4-enine. It catalyses the reaction N-hexadecanoylsphinganine + a 1,2-diacyl-sn-glycero-3-phosphocholine = N-hexadecanoyl-sphinganine-1-phosphocholine + a 1,2-diacyl-sn-glycerol. The enzyme catalyses N-hexadecanoyl-(4R)-hydroxysphinganine + a 1,2-diacyl-sn-glycero-3-phosphocholine = N-hexadecanoyl-(4R)-hydroxysphinganine-phosphocholine + a 1,2-diacyl-sn-glycerol. It carries out the reaction an N-acylsphing-4-enine + a 1,2-diacyl-sn-glycero-3-phosphoethanolamine = an N-acylsphing-4-enine 1-phosphoethanolamine + a 1,2-diacyl-sn-glycerol. It participates in sphingolipid metabolism. Its activity is regulated as follows. Inhibited by bacterial PC-phospholipase C inhibitor D609. Functionally, major sphingomyelin synthase at the Golgi apparatus. Catalyzes the reversible transfer of phosphocholine moiety in sphingomyelin biosynthesis: in the forward reaction transfers phosphocholine head group of phosphatidylcholine (PC) on to ceramide (CER) to form ceramide phosphocholine (sphingomyelin, SM) and diacylglycerol (DAG) as by-product, and in the reverse reaction transfers phosphocholine from SM to DAG to form PC and CER. The direction of the reaction depends on the levels of CER and DAG in Golgi membranes. Converts the newly synthesized CER, that is transported from the endoplasmic reticulum to the trans-Golgi by the Cer transport protein (CERT), to SM. Can form a heteromeric complex with glucosylceramide synthase (GCS) increasing SMS activity and reducing glucosylceramide synthesis, a critical mechanism that controls the metabolic fate of CER in the Golgi. Does not use free phosphorylcholine or CDP-choline as donor. Can also transfer phosphoethanolamine head group of phosphatidylethanolamine (PE) on to CER to form ceramide phosphoethanolamine (CPE). Regulates receptor-mediated signal transduction via mitogenic DAG and proapoptotic CER, as well as via SM, a structural component of membrane rafts that serve as platforms for signal transduction and protein sorting. Plays a role in secretory transport via regulation of DAG pool at the Golgi apparatus and its downstream effects on PRKD1. The chain is Phosphatidylcholine:ceramide cholinephosphotransferase 1 (SGMS1) from Homo sapiens (Human).